Consider the following 39-residue polypeptide: SGSETAKIGDGCFGLPIDRIGSASGMGCGSVPKPTPGGS.

A propeptide spanning residues 1–8 is cleaved from the precursor; it reads SGSETAKI. Residues C12 and C28 are joined by a disulfide bond. T35 carries O-linked (GalNAc...) threonine glycosylation.

Belongs to the natriuretic peptide family. In terms of processing, O-linked glycans consist of galactosyl-beta(1-3)-N-acetylgalactosamine (Gal-GalNAc). The synthetic non-glycosylated form shows higher potency on natriuretic receptors (EC(50)=672.90 nM) and NPR2 (EC(50)=261.0 nM). As to expression, expressed by the venom gland.

It is found in the secreted. Functionally, snake venom natriuretic peptide that targets both NPR1 (EC(50)=1080.0 nM) and NPR2 (EC(50)=328.60 nM). Exhibits hypotensive and vasodepressor activities. The polypeptide is Natriuretic peptide TcNPa (Tropidechis carinatus (Australian rough-scaled snake)).